Consider the following 638-residue polypeptide: UvrABC system protein C (638 aa).

A GIY-YIG domain is found at 20–97 (ECAGVYQMFD…IKKFQPKFNI (78 aa)). The 36-residue stretch at 209 to 244 (KELQENLSKKMEELSSHMYFEEAAEIRDRIKALSYV) folds into the UVR domain.

This sequence belongs to the UvrC family. In terms of assembly, interacts with UvrB in an incision complex.

The protein resides in the cytoplasm. In terms of biological role, the UvrABC repair system catalyzes the recognition and processing of DNA lesions. UvrC both incises the 5' and 3' sides of the lesion. The N-terminal half is responsible for the 3' incision and the C-terminal half is responsible for the 5' incision. This is UvrABC system protein C from Rickettsia canadensis (strain McKiel).